We begin with the raw amino-acid sequence, 486 residues long: Aspartyl/glutamyl-tRNA(Asn/Gln) amidotransferase subunit B (486 aa).

This sequence belongs to the GatB/GatE family. GatB subfamily. Heterotrimer of A, B and C subunits.

The catalysed reaction is L-glutamyl-tRNA(Gln) + L-glutamine + ATP + H2O = L-glutaminyl-tRNA(Gln) + L-glutamate + ADP + phosphate + H(+). It carries out the reaction L-aspartyl-tRNA(Asn) + L-glutamine + ATP + H2O = L-asparaginyl-tRNA(Asn) + L-glutamate + ADP + phosphate + 2 H(+). In terms of biological role, allows the formation of correctly charged Asn-tRNA(Asn) or Gln-tRNA(Gln) through the transamidation of misacylated Asp-tRNA(Asn) or Glu-tRNA(Gln) in organisms which lack either or both of asparaginyl-tRNA or glutaminyl-tRNA synthetases. The reaction takes place in the presence of glutamine and ATP through an activated phospho-Asp-tRNA(Asn) or phospho-Glu-tRNA(Gln). This chain is Aspartyl/glutamyl-tRNA(Asn/Gln) amidotransferase subunit B, found in Leptospira interrogans serogroup Icterohaemorrhagiae serovar Lai (strain 56601).